Consider the following 95-residue polypeptide: MNNLTLEKKAQTRNLRKTLQGIVIRTSPKTIMVEVETAYKHKLYAKRFKKRKKFNTHDEKNLAEVGDFVKIAECRPISKTKHFRLVEVLQKKGEI.

Belongs to the universal ribosomal protein uS17 family. As to quaternary structure, part of the 30S ribosomal subunit.

In terms of biological role, one of the primary rRNA binding proteins, it binds specifically to the 5'-end of 16S ribosomal RNA. This Mesomycoplasma hyopneumoniae (strain 7448) (Mycoplasma hyopneumoniae) protein is Small ribosomal subunit protein uS17.